Here is a 224-residue protein sequence, read N- to C-terminus: Giant hemoglobin linker AV-1 chain (224 aa).

One can recognise an LDL-receptor class A domain in the interval 62–103; sequence HWCPSKYHRCGNSPQCMSNMAFCDGVNDCKNHFDEDENRCVV. 3 cysteine pairs are disulfide-bonded: Cys-64–Cys-77, Cys-71–Cys-90, and Cys-84–Cys-101. Asn-108 is a glycosylation site (N-linked (GlcNAc...) asparagine).

As to quaternary structure, giant hemoglobin is composed of four heme-containing chains (AI to AIV), and two linker chains (AV and AVI).

Functionally, acts as a linker for the assembly of heme-containing chains in the construction of giant hemoglobin. The polypeptide is Giant hemoglobin linker AV-1 chain (Lamellibrachia sp. (Deep-sea giant tube worm)).